The sequence spans 453 residues: Bifunctional protein GlmU (453 aa).

Positions 1–225 (MNIVILAAGT…EWETLGVNSK (225 aa)) are pyrophosphorylase. Residues 6-9 (LAAG), Lys20, Gln71, 76-77 (GT), 98-100 (YGD), Gly135, Glu150, Asn165, and Asn223 each bind UDP-N-acetyl-alpha-D-glucosamine. Residue Asp100 participates in Mg(2+) binding. Mg(2+) is bound at residue Asn223. Residues 226–246 (QQLAELERIHQRNVADALLVA) are linker. The interval 247-453 (GVTLADPARL…GYVRPTKKKS (207 aa)) is N-acetyltransferase. UDP-N-acetyl-alpha-D-glucosamine-binding residues include Arg329 and Lys347. The active-site Proton acceptor is the His359. Residues Tyr362 and Asn373 each contribute to the UDP-N-acetyl-alpha-D-glucosamine site. Acetyl-CoA contacts are provided by residues Ala376, 382-383 (NY), Ser401, and Ala419.

This sequence in the N-terminal section; belongs to the N-acetylglucosamine-1-phosphate uridyltransferase family. It in the C-terminal section; belongs to the transferase hexapeptide repeat family. In terms of assembly, homotrimer. Mg(2+) is required as a cofactor.

It is found in the cytoplasm. It carries out the reaction alpha-D-glucosamine 1-phosphate + acetyl-CoA = N-acetyl-alpha-D-glucosamine 1-phosphate + CoA + H(+). The catalysed reaction is N-acetyl-alpha-D-glucosamine 1-phosphate + UTP + H(+) = UDP-N-acetyl-alpha-D-glucosamine + diphosphate. It participates in nucleotide-sugar biosynthesis; UDP-N-acetyl-alpha-D-glucosamine biosynthesis; N-acetyl-alpha-D-glucosamine 1-phosphate from alpha-D-glucosamine 6-phosphate (route II): step 2/2. Its pathway is nucleotide-sugar biosynthesis; UDP-N-acetyl-alpha-D-glucosamine biosynthesis; UDP-N-acetyl-alpha-D-glucosamine from N-acetyl-alpha-D-glucosamine 1-phosphate: step 1/1. The protein operates within bacterial outer membrane biogenesis; LPS lipid A biosynthesis. Functionally, catalyzes the last two sequential reactions in the de novo biosynthetic pathway for UDP-N-acetylglucosamine (UDP-GlcNAc). The C-terminal domain catalyzes the transfer of acetyl group from acetyl coenzyme A to glucosamine-1-phosphate (GlcN-1-P) to produce N-acetylglucosamine-1-phosphate (GlcNAc-1-P), which is converted into UDP-GlcNAc by the transfer of uridine 5-monophosphate (from uridine 5-triphosphate), a reaction catalyzed by the N-terminal domain. The polypeptide is Bifunctional protein GlmU (Paraburkholderia xenovorans (strain LB400)).